Consider the following 116-residue polypeptide: Large ribosomal subunit protein bL17 (116 aa).

This sequence belongs to the bacterial ribosomal protein bL17 family. As to quaternary structure, part of the 50S ribosomal subunit. Contacts protein L32.

This Synechococcus sp. (strain CC9902) protein is Large ribosomal subunit protein bL17.